We begin with the raw amino-acid sequence, 2225 residues long: Multifunctional protein CAD (2225 aa).

Ala2 carries the post-translational modification N-acetylalanine. The tract at residues 2-365 (AALVLEDGSV…TVREAAAGNI (364 aa)) is GATase (Glutamine amidotransferase). Positions 44, 222, and 224 each coordinate L-glutamine. The region spanning 177 to 363 (RICALDCGLK…LETVREAAAG (187 aa)) is the Glutamine amidotransferase type-1 domain. The active-site Nucleophile; for GATase activity is Cys252. L-glutamine is bound by residues Leu253, Gln256, Asn294, Gly296, and Phe297. Active-site for GATase activity residues include His336 and Glu338. A linker region spans residues 366 to 394 (GGQTVRERLAQRLCPPELPIPGSGLPPPR). Positions 395 to 933 (KVLILGSGGL…NTHDLDFRAP (539 aa)) are CPSase A. Residues 395–1455 (KVLILGSGGL…APPLKVHVDC (1061 aa)) form a CPSase (Carbamoyl-phosphate synthase) region. Thr456 bears the Phosphothreonine; by MAPK1 mark. Arg515, Arg555, Gly561, Gly562, Lys592, Glu599, Gly625, Ile626, His627, Gln668, and Glu682 together coordinate ATP. Residues 519–711 (AARMAEIGEH…LAYVAAKLAL (193 aa)) enclose the ATP-grasp 1 domain. Residues Gln668, Glu682, and Asn684 each coordinate Mg(2+). 3 residues coordinate Mn(2+): Gln668, Glu682, and Asn684. At Lys747 the chain carries N6-acetyllysine. The segment at 934–1455 (HVLVLGSGVY…APPLKVHVDC (522 aa)) is CPSase B. At Ser1038 the chain carries Phosphoserine. The ATP-grasp 2 domain occupies 1052–1243 (SRLLDTIGIS…LVALATRIIM (192 aa)). ATP-binding residues include Arg1088, Lys1127, Ile1129, Glu1134, Gly1159, Val1160, His1161, Ser1162, Gln1202, and Glu1214. The Mg(2+) site is built by Gln1202, Glu1214, and Asn1216. Positions 1202, 1214, and 1216 each coordinate Mn(2+). An MGS-like domain is found at 1308–1462 (FKIPEKNILL…VDCMTSQKLV (155 aa)). Ser1406 carries the post-translational modification Phosphoserine; by PKA. At Lys1411 the chain carries N6-acetyllysine. The interval 1456 to 1788 (MTSQKLVRLP…VKGTVRRVVL (333 aa)) is DHOase (dihydroorotase). His1471 and His1473 together coordinate Zn(2+). Residues Arg1475 and Asn1505 each contribute to the (S)-dihydroorotate site. Zn(2+) contacts are provided by Lys1556, His1590, Cys1613, His1614, and Glu1637. Lys1556 carries the N6-carboxylysine modification. Arg1661 contacts (S)-dihydroorotate. Asp1686 lines the Zn(2+) pocket. Catalysis depends on Asp1686, which acts as the For DHOase activity. (S)-dihydroorotate-binding residues include His1690 and Pro1702. Residues 1789–1917 (RGEVAYIDGQ…GLLHPQMSPL (129 aa)) are linker. The tract at residues 1815 to 1885 (GVVPQPPPST…VVEPELMGTP (71 aa)) is disordered. Over residues 1825–1834 (PATTEITTTP) the composition is skewed to low complexity. Position 1859 is a phosphoserine (Ser1859). Positions 1866–1878 (EEPKEKPPRKVVE) are enriched in basic and acidic residues. Thr1884 carries the phosphothreonine modification. Phosphoserine occurs at positions 1900 and 1938. The tract at residues 1918-2225 (LHSLVGQHIL…ALLATVLGRF (308 aa)) is ATCase (Aspartate transcarbamylase). 2 residues coordinate carbamoyl phosphate: Arg1975 and Thr1976. Lys2003 is a binding site for L-aspartate. 3 residues coordinate carbamoyl phosphate: Arg2024, His2052, and Gln2055. Arg2085 and Arg2146 together coordinate L-aspartate. Carbamoyl phosphate contacts are provided by Met2185 and Pro2186.

In the N-terminal section; belongs to the CarA family. This sequence in the 2nd section; belongs to the CarB family. The protein in the 3rd section; belongs to the metallo-dependent hydrolases superfamily. DHOase family. CAD subfamily. It in the C-terminal section; belongs to the aspartate/ornithine carbamoyltransferase superfamily. ATCase family. As to quaternary structure, homohexamer. Interacts with CIPC. Zn(2+) is required as a cofactor. Mg(2+) serves as cofactor. The cofactor is Mn(2+). Activated by MAP kinase (Erk1/2) phosphorylation just prior to the S phase of the cell cycle, when the demand for pyrimidine nucleotides is greatest, and down-regulated as the cells emerge from S phase by protein kinase A (PKA) phosphorylation. Phosphorylation at Ser-1859 by RPS6KB1 downstream of MTOR promotes oligomerization and stimulates dihydroorotase activity. Phosphorylation at Ser-1406 reduces sensitivity to feedback inhibition by UTP.

It is found in the cytoplasm. The protein resides in the nucleus. The enzyme catalyses hydrogencarbonate + L-glutamine + 2 ATP + H2O = carbamoyl phosphate + L-glutamate + 2 ADP + phosphate + 2 H(+). The catalysed reaction is L-glutamine + H2O = L-glutamate + NH4(+). It carries out the reaction hydrogencarbonate + NH4(+) + 2 ATP = carbamoyl phosphate + 2 ADP + phosphate + 2 H(+). It catalyses the reaction carbamoyl phosphate + L-aspartate = N-carbamoyl-L-aspartate + phosphate + H(+). The enzyme catalyses (S)-dihydroorotate + H2O = N-carbamoyl-L-aspartate + H(+). The protein operates within pyrimidine metabolism; UMP biosynthesis via de novo pathway; (S)-dihydroorotate from bicarbonate: step 1/3. It functions in the pathway pyrimidine metabolism; UMP biosynthesis via de novo pathway; (S)-dihydroorotate from bicarbonate: step 2/3. Its pathway is pyrimidine metabolism; UMP biosynthesis via de novo pathway; (S)-dihydroorotate from bicarbonate: step 3/3. With respect to regulation, allosterically regulated and controlled by phosphorylation. 5-phosphoribose 1-diphosphate (PRPP) is an activator while UMP and UTP are inhibitors of the CPSase reaction. Multifunctional protein that encodes the first 3 enzymatic activities of the de novo pyrimidine pathway: carbamoylphosphate synthetase (CPSase; EC 6.3.5.5), aspartate transcarbamylase (ATCase; EC 2.1.3.2) and dihydroorotase (DHOase; EC 3.5.2.3). The CPSase-function is accomplished in 2 steps, by a glutamine-dependent amidotransferase activity (GATase) that binds and cleaves glutamine to produce ammonia, followed by an ammonium-dependent carbamoyl phosphate synthetase, which reacts with the ammonia, hydrogencarbonate and ATP to form carbamoyl phosphate. The endogenously produced carbamoyl phosphate is sequestered and channeled to the ATCase active site. ATCase then catalyzes the formation of carbamoyl-L-aspartate from L-aspartate and carbamoyl phosphate. In the last step, DHOase catalyzes the cyclization of carbamoyl aspartate to dihydroorotate. The protein is Multifunctional protein CAD (Cad) of Mus musculus (Mouse).